Reading from the N-terminus, the 134-residue chain is Putative STAG3-like protein 2 (134 aa).

The region spanning 10 to 95 (PKVTCRDVLP…GRFKDWMVSM (86 aa)) is the SCD domain.

The protein belongs to the SCC3 family.

It is found in the nucleus. In Homo sapiens (Human), this protein is Putative STAG3-like protein 2 (STAG3L2).